A 585-amino-acid chain; its full sequence is MTITYTSQVANARLGSFSRLLLCWRGSIYKLLYGEFLIFLLCYYIIRFIYRLALTEEQQLMFEKLTLYCDSYIQLIPISFVLGFYVTLVVTRWWNQYENLPWPDRLMSLVSGFVEGKDEQGRLLRRTLIRYANLGNVLILRSVSTAVYKRFPSAQHLVQAGFMTPAEHKQLEKLSLPHNMFWVPWVWFANLSMKAWLGGRIRDPILLQSLLNEMNTLRTQCGHLYAYDWISIPLVYTQVVTVAVYSFFLTCLVGRQFLNPAKAYPGHELDLVVPVFTFLQFFFYVGWLKVAEQLINPFGEDDDDFETNWIVDRNLQVSLLAVDEMHQDLPRMEPDMYWNKPEPQPPYTAASAQFRRASFMGSTFNISLNKEEMEFQPNQEDEEDAHAGIIGRFLGLQSHDHHPPRANSRTKLLWPKRESLLHEGLPKNHKAAKQNVRGQEDNKAWKLKAVDAFKSAPLYQRPGYYSAPQTPLSPTPMFFPLEPSAPSKLHSVTGIDTKDKSLKTVSSGAKKSFELLSESDGALMEHPEVSQVRRKTVEFNLTDMPEIPENHLKEPLEQSPTNIHTTLKDHMDPYWALENRDEAHS.

Residues 1–31 (MTITYTSQVANARLGSFSRLLLCWRGSIYKL) are Cytoplasmic-facing. Position 10 (Ala10) interacts with Ca(2+). Residues 32–51 (LYGEFLIFLLCYYIIRFIYR) traverse the membrane as a helical segment. Residues 52-60 (LALTEEQQL) lie on the Extracellular side of the membrane. The helical transmembrane segment at 61–82 (MFEKLTLYCDSYIQLIPISFVL) threads the bilayer. Over 83-237 (GFYVTLVVTR…DWISIPLVYT (155 aa)) the chain is Cytoplasmic. The helical transmembrane segment at 238 to 255 (QVVTVAVYSFFLTCLVGR) threads the bilayer. Residues 256-274 (QFLNPAKAYPGHELDLVVP) lie on the Extracellular side of the membrane. Residues 275–288 (VFTFLQFFFYVGWL) traverse the membrane as a helical segment. Residues 289 to 585 (KVAEQLINPF…ALENRDEAHS (297 aa)) lie on the Cytoplasmic side of the membrane. 4 residues coordinate Ca(2+): Gln293, Asn296, Asp301, and Asp304. The auto-inhibitory segment stretch occupies residues 346–379 (PYTAASAQFRRASFMGSTFNISLNKEEMEFQPNQ).

It belongs to the anion channel-forming bestrophin (TC 1.A.46) family. Calcium-sensitive chloride channel subfamily. Interacts with YWHAG; this interaction promotes the ligand-gated L-glutamate channel activity leading to the positive regulation of NMDA glutamate receptor activity through the L-glutamate secretion. Predominantly expressed in the basolateral membrane of the retinal pigment epithelium.

It localises to the cell membrane. The protein resides in the basolateral cell membrane. The catalysed reaction is chloride(in) = chloride(out). It carries out the reaction hydrogencarbonate(in) = hydrogencarbonate(out). The enzyme catalyses 4-aminobutanoate(in) = 4-aminobutanoate(out). It catalyses the reaction L-glutamate(out) = L-glutamate(in). Its activity is regulated as follows. Inactivated by sulfhydryl-reactive agents. Its function is as follows. Ligand-gated anion channel that allows the movement of anions across cell membranes when activated by calcium (Ca2+). Allows the movement of chloride and hydrogencarbonate. Found in a partially open conformation leading to significantly smaller chloride movement. Upon F2R/PAR-1 activation, the sequestered calcium is released into the cytosol of astrocytes, leading to the (Ca2+)-dependent release of L-glutamate into the synaptic cleft that targets the neuronal postsynaptic GRIN2A/NMDAR receptor resulting in the synaptic plasticity regulation. Upon activation of the norepinephrine-alpha-1 adrenergic receptor signaling pathway, transports as well D-serine than L-glutamate in a (Ca2+)-dependent manner, leading to activation of adjacent NMDAR receptors and therefore regulates the heterosynaptic long-term depression and metaplasticity during initial memory acquisition. Releases the 4-aminobutanoate neurotransmitter in a (Ca2+)-dependent manner, and participates in its tonic release from cerebellar glial cells. The chain is Bestrophin-1 from Homo sapiens (Human).